A 396-amino-acid polypeptide reads, in one-letter code: Ribosomal RNA large subunit methyltransferase I (396 aa).

The region spanning 2 to 81 (SVRLVLAKGR…ESIDIAFFSR (80 aa)) is the PUA domain.

The protein belongs to the methyltransferase superfamily. RlmI family.

Its subcellular location is the cytoplasm. It carries out the reaction cytidine(1962) in 23S rRNA + S-adenosyl-L-methionine = 5-methylcytidine(1962) in 23S rRNA + S-adenosyl-L-homocysteine + H(+). Specifically methylates the cytosine at position 1962 (m5C1962) of 23S rRNA. In Escherichia coli (strain K12 / MC4100 / BW2952), this protein is Ribosomal RNA large subunit methyltransferase I.